Here is a 603-residue protein sequence, read N- to C-terminus: Serine protease 56 (603 aa).

An N-terminal signal peptide occupies residues 1 to 19 (MLLAVLLLLPLPSSWFAHG). The tract at residues 64–96 (SHECRGSGRPRPQALLQDPPEPGPCGERRPSTA) is disordered. A glycan (N-linked (GlcNAc...) asparagine) is linked at N97. The region spanning 105–337 (IVGGSAAPPG…FKDWLQEQMS (233 aa)) is the Peptidase S1 domain. An intrachain disulfide couples C130 to C146. Active-site charge relay system residues include H145 and D191. Intrachain disulfides connect C225–C292, C256–C271, and C282–C313. S286 acts as the Charge relay system in catalysis. 2 disordered regions span residues 442–474 (PARELRLHSGSRAAGTRFPKRRPEPRGEANGCP) and 573–603 (EGPWMDVGQGPGLERKGHHPLNPQVPPARQP).

This sequence belongs to the peptidase S1 family. Expressed neural retina, cornea, sclera and optic nerve.

In terms of biological role, serine protease required during eye development. The polypeptide is Serine protease 56 (PRSS56) (Homo sapiens (Human)).